Consider the following 597-residue polypeptide: Aspartate--tRNA(Asp/Asn) ligase (597 aa).

Residue glutamate 182 participates in L-aspartate binding. The interval 206 to 209 is aspartate; it reads QLFK. Arginine 228 provides a ligand contact to L-aspartate. ATP-binding positions include 228–230 and glutamine 237; that span reads RDE. L-aspartate is bound at residue histidine 456. Glutamate 490 lines the ATP pocket. Residue arginine 497 participates in L-aspartate binding. 542–545 contacts ATP; it reads GFDR.

It belongs to the class-II aminoacyl-tRNA synthetase family. Type 1 subfamily. In terms of assembly, homodimer.

It is found in the cytoplasm. The catalysed reaction is tRNA(Asx) + L-aspartate + ATP = L-aspartyl-tRNA(Asx) + AMP + diphosphate. Functionally, aspartyl-tRNA synthetase with relaxed tRNA specificity since it is able to aspartylate not only its cognate tRNA(Asp) but also tRNA(Asn). Reaction proceeds in two steps: L-aspartate is first activated by ATP to form Asp-AMP and then transferred to the acceptor end of tRNA(Asp/Asn). This chain is Aspartate--tRNA(Asp/Asn) ligase, found in Desulfatibacillum aliphaticivorans.